A 418-amino-acid chain; its full sequence is Replication factor C large subunit (418 aa).

47–54 (GSQGTGKT) is an ATP binding site.

This sequence belongs to the activator 1 small subunits family. RfcL subfamily. Heteromultimer composed of small subunits (RfcS) and large subunits (RfcL).

Functionally, part of the RFC clamp loader complex which loads the PCNA sliding clamp onto DNA. This Thermoplasma acidophilum (strain ATCC 25905 / DSM 1728 / JCM 9062 / NBRC 15155 / AMRC-C165) protein is Replication factor C large subunit.